The chain runs to 568 residues: Potassium-transporting ATPase potassium-binding subunit (568 aa).

The next 12 membrane-spanning stretches (helical) occupy residues 7–27 (LLIT…GNII), 67–87 (YALA…TLLV), 137–157 (GLTV…FALI), 180–200 (LYLL…QGVI), 258–278 (FIQI…FGQV), 288–308 (LLWA…YAEL), 332–352 (FGIL…CGAV), 361–381 (ALGG…FGGV), 384–404 (GLYG…LMIG), 421–441 (MVAL…ALTI), 488–508 (LLLA…VLAI), and 535–555 (LLIL…LILG).

The protein belongs to the KdpA family. As to quaternary structure, the system is composed of three essential subunits: KdpA, KdpB and KdpC.

Its subcellular location is the cell inner membrane. Functionally, part of the high-affinity ATP-driven potassium transport (or Kdp) system, which catalyzes the hydrolysis of ATP coupled with the electrogenic transport of potassium into the cytoplasm. This subunit binds the periplasmic potassium ions and delivers the ions to the membrane domain of KdpB through an intramembrane tunnel. This Photorhabdus laumondii subsp. laumondii (strain DSM 15139 / CIP 105565 / TT01) (Photorhabdus luminescens subsp. laumondii) protein is Potassium-transporting ATPase potassium-binding subunit.